The primary structure comprises 182 residues: MAKLVSKTYGEALFDLALENQSLDIIEEEIKAVKMVFNENTELIKFLNHPKITKEEKVAFVENIFKGRVSDDVTGFLVIIIKKGRYDEISGIFDYFLAKVREHKNIGVAYVTSAVEISEQEKEQIKDKLLATTKYVQFEMNYKVDASILGGLIIRIGDRVVDSSLKSKLNTLSKNLFKIQLG.

Belongs to the ATPase delta chain family. As to quaternary structure, F-type ATPases have 2 components, F(1) - the catalytic core - and F(0) - the membrane proton channel. F(1) has five subunits: alpha(3), beta(3), gamma(1), delta(1), epsilon(1). F(0) has three main subunits: a(1), b(2) and c(10-14). The alpha and beta chains form an alternating ring which encloses part of the gamma chain. F(1) is attached to F(0) by a central stalk formed by the gamma and epsilon chains, while a peripheral stalk is formed by the delta and b chains.

The protein resides in the cell membrane. Functionally, f(1)F(0) ATP synthase produces ATP from ADP in the presence of a proton or sodium gradient. F-type ATPases consist of two structural domains, F(1) containing the extramembraneous catalytic core and F(0) containing the membrane proton channel, linked together by a central stalk and a peripheral stalk. During catalysis, ATP synthesis in the catalytic domain of F(1) is coupled via a rotary mechanism of the central stalk subunits to proton translocation. This protein is part of the stalk that links CF(0) to CF(1). It either transmits conformational changes from CF(0) to CF(1) or is implicated in proton conduction. This Lachnoclostridium phytofermentans (strain ATCC 700394 / DSM 18823 / ISDg) (Clostridium phytofermentans) protein is ATP synthase subunit delta.